The chain runs to 414 residues: GLABROUS1 enhancer-binding protein-like 3 (414 aa).

Disordered regions lie at residues 36–57 and 167–191; these read QLRT…LSSS and QAKD…DRDV. A compositionally biased stretch (low complexity) spans 38-50; sequence RTTTTRTTTTRTT. The interval 382-403 is non-canonical leucine-zipper; it reads LINEWKALFVDEQRLCVKKLTF.

It belongs to the GeBP family. As to quaternary structure, homo- and heterodimers. Interacts with GEBP, GPL1 and GPL2. Interacts with GEBP. As to expression, expressed in the apical meristem and young leaf primordia. Detected in the vascular tissues of rosette leaves, in primary and secondary roots and at the base of flowers and siliques.

Its subcellular location is the nucleus. Its function is as follows. Probable transcription factor. Involved in stress responses. Plays a repressive role in cell expansion by counteracting the positive role of CPR5 in this process, but does not regulate cell proliferation or endoreduplication. The polypeptide is GLABROUS1 enhancer-binding protein-like 3 (Arabidopsis thaliana (Mouse-ear cress)).